The chain runs to 72 residues: Translation initiation factor IF-1 (72 aa).

One can recognise an S1-like domain in the interval 1-72 (MSKQDVIEVE…TRGRIVYRYK (72 aa)).

The protein belongs to the IF-1 family. As to quaternary structure, component of the 30S ribosomal translation pre-initiation complex which assembles on the 30S ribosome in the order IF-2 and IF-3, IF-1 and N-formylmethionyl-tRNA(fMet); mRNA recruitment can occur at any time during PIC assembly.

The protein resides in the cytoplasm. Functionally, one of the essential components for the initiation of protein synthesis. Stabilizes the binding of IF-2 and IF-3 on the 30S subunit to which N-formylmethionyl-tRNA(fMet) subsequently binds. Helps modulate mRNA selection, yielding the 30S pre-initiation complex (PIC). Upon addition of the 50S ribosomal subunit IF-1, IF-2 and IF-3 are released leaving the mature 70S translation initiation complex. This is Translation initiation factor IF-1 from Pelotomaculum thermopropionicum (strain DSM 13744 / JCM 10971 / SI).